A 370-amino-acid chain; its full sequence is 3-isopropylmalate dehydrogenase (370 aa).

77-90 (GPKWDAVPYEVRPE) contacts NAD(+). Substrate is bound by residues Arg97, Arg107, Arg135, and Asp226. Residues Asp226, Asp250, and Asp254 each contribute to the Mg(2+) site. 290-302 (GSAPDIAGTGVAN) contributes to the NAD(+) binding site.

It belongs to the isocitrate and isopropylmalate dehydrogenases family. LeuB type 1 subfamily. As to quaternary structure, homodimer. It depends on Mg(2+) as a cofactor. Mn(2+) is required as a cofactor.

It is found in the cytoplasm. It catalyses the reaction (2R,3S)-3-isopropylmalate + NAD(+) = 4-methyl-2-oxopentanoate + CO2 + NADH. Its pathway is amino-acid biosynthesis; L-leucine biosynthesis; L-leucine from 3-methyl-2-oxobutanoate: step 3/4. Catalyzes the oxidation of 3-carboxy-2-hydroxy-4-methylpentanoate (3-isopropylmalate) to 3-carboxy-4-methyl-2-oxopentanoate. The product decarboxylates to 4-methyl-2 oxopentanoate. This chain is 3-isopropylmalate dehydrogenase, found in Rhizobium meliloti (strain 1021) (Ensifer meliloti).